A 257-amino-acid polypeptide reads, in one-letter code: Ethanolamine ammonia-lyase small subunit (257 aa).

Residues Val153, Glu174, and Cys203 each contribute to the adenosylcob(III)alamin site.

Belongs to the EutC family. As to quaternary structure, the basic unit is a heterodimer which dimerizes to form tetramers. The heterotetramers trimerize; 6 large subunits form a core ring with 6 small subunits projecting outwards. Adenosylcob(III)alamin is required as a cofactor.

The protein resides in the bacterial microcompartment. It catalyses the reaction ethanolamine = acetaldehyde + NH4(+). It participates in amine and polyamine degradation; ethanolamine degradation. Its function is as follows. Catalyzes the deamination of various vicinal amino-alcohols to oxo compounds. Allows this organism to utilize ethanolamine as the sole source of nitrogen and carbon in the presence of external vitamin B12. This Rhodococcus erythropolis (Arthrobacter picolinophilus) protein is Ethanolamine ammonia-lyase small subunit.